The primary structure comprises 1399 residues: DNA-directed RNA polymerase subunit beta' (1399 aa).

4 residues coordinate Zn(2+): Cys-70, Cys-72, Cys-85, and Cys-88. 3 residues coordinate Mg(2+): Asp-460, Asp-462, and Asp-464. Zn(2+)-binding residues include Cys-814, Cys-888, Cys-895, and Cys-898.

It belongs to the RNA polymerase beta' chain family. As to quaternary structure, the RNAP catalytic core consists of 2 alpha, 1 beta, 1 beta' and 1 omega subunit. When a sigma factor is associated with the core the holoenzyme is formed, which can initiate transcription. Mg(2+) is required as a cofactor. The cofactor is Zn(2+).

The enzyme catalyses RNA(n) + a ribonucleoside 5'-triphosphate = RNA(n+1) + diphosphate. Its function is as follows. DNA-dependent RNA polymerase catalyzes the transcription of DNA into RNA using the four ribonucleoside triphosphates as substrates. This is DNA-directed RNA polymerase subunit beta' from Pseudomonas putida (strain GB-1).